The sequence spans 460 residues: Ammonium transporter Rh type C (460 aa).

The Cytoplasmic segment spans residues 1–9 (MAWNTNLRW). A helical transmembrane segment spans residues 10 to 30 (RLPLTCLLLQVIMVILFGVFV). Topologically, residues 31-61 (RYDPDADAHWIDERLGRNISSDMDNEFYYRY) are extracellular. Asn-48 carries N-linked (GlcNAc...) asparagine glycosylation. The chain crosses the membrane as a helical span at residues 62-82 (PSFQDVHVMIFVGFGFLMTFL). Residues 83–86 (QRYG) are Cytoplasmic-facing. Residues 87-107 (FSSVGFNFLLAAFGIQWALLM) traverse the membrane as a helical segment. Residues 108-125 (QGWLHSFHSGYIVLGVEN) are Extracellular-facing. A helical membrane pass occupies residues 126-145 (LINADFCVGSVCVAFGAVLG). Residues 146–151 (KVSPVQ) lie on the Cytoplasmic side of the membrane. The chain crosses the membrane as a helical span at residues 152–174 (LLIMTLFQVTLFSVNEFILLNLL). Residues 175–179 (EVKDA) lie on the Extracellular side of the membrane. A helical transmembrane segment spans residues 180–200 (GGSMTIHTFGAYFGLTVTWIL). At 201–219 (YRPNLYQSKERQSSVYHSD) the chain is on the cytoplasmic side. A helical membrane pass occupies residues 220 to 240 (LFAMIGTLFLWMYWPSFNSAV). Over 241-251 (SHHGDAQHRAA) the chain is Extracellular. The helical transmembrane segment at 252 to 272 (INTYCSLAACVLTSVALSSAL) threads the bilayer. Residues 273 to 285 (HKKGKLDMVHIQN) are Cytoplasmic-facing. Residues 286-306 (ATLAGGVAVGTAAEMMLMPYG) traverse the membrane as a helical segment. A topological domain (extracellular) is located at residue Ser-307. The chain crosses the membrane as a helical span at residues 308 to 328 (LIVGFICGIISTLGFVYLTPF). Residues 329–340 (LESRLRIQDTCG) lie on the Cytoplasmic side of the membrane. Residues 341-361 (IHNLHGMPGIIGGIVGAVTAA) traverse the membrane as a helical segment. Residues 362-396 (SANTQQYGQKGLAHAFDIDATKTTWTASMQGSFQA) are Extracellular-facing. The helical transmembrane segment at 397–417 (AGLFVSLAMALVGGLIVGVIL) threads the bilayer. Residues 418–460 (KLPFWGQPADENCFEDAIYWEIPEDQKSLVSRSEDPTLRPTEP) lie on the Cytoplasmic side of the membrane.

The protein belongs to the ammonium transporter (TC 2.A.49) family. Rh subfamily. Homotrimer. In terms of processing, N-glycosylated.

It is found in the cell membrane. Its subcellular location is the apical cell membrane. The catalysed reaction is NH4(+)(in) = NH4(+)(out). The enzyme catalyses methylamine(out) = methylamine(in). It catalyses the reaction CO2(out) = CO2(in). Ammonium transporter involved in the maintenance of acid-base homeostasis. Transports ammonium and its related derivative methylammonium across the plasma membrane of epithelial cells likely contributing to renal transepithelial ammonia transport and ammonia metabolism. Postulated to primarily mediate an electroneutral bidirectional transport of NH3 ammonia species according to a mechanism that implies interaction of an NH4(+) ion with acidic residues of the pore entry followed by dissociation of NH4(+) into NH3 and H(+). As a result NH3 transits through the central pore and is protonated on the extracellular side reforming NH4(+). May act as a CO2 channel providing for renal acid secretion. This is Ammonium transporter Rh type C (RHCG) from Sus scrofa (Pig).